The chain runs to 110 residues: Ribonuclease P protein component 1 (110 aa).

It belongs to the eukaryotic/archaeal RNase P protein component 1 family. Consists of a catalytic RNA component and at least 4-5 protein subunits.

It localises to the cytoplasm. The catalysed reaction is Endonucleolytic cleavage of RNA, removing 5'-extranucleotides from tRNA precursor.. Functionally, part of ribonuclease P, a protein complex that generates mature tRNA molecules by cleaving their 5'-ends. In Methanosarcina barkeri (strain Fusaro / DSM 804), this protein is Ribonuclease P protein component 1.